The primary structure comprises 340 residues: Phosphoribosylformylglycinamidine cyclo-ligase (340 aa).

Belongs to the AIR synthase family.

The protein resides in the cytoplasm. It carries out the reaction 2-formamido-N(1)-(5-O-phospho-beta-D-ribosyl)acetamidine + ATP = 5-amino-1-(5-phospho-beta-D-ribosyl)imidazole + ADP + phosphate + H(+). It functions in the pathway purine metabolism; IMP biosynthesis via de novo pathway; 5-amino-1-(5-phospho-D-ribosyl)imidazole from N(2)-formyl-N(1)-(5-phospho-D-ribosyl)glycinamide: step 2/2. This is Phosphoribosylformylglycinamidine cyclo-ligase from Streptococcus pneumoniae (strain Taiwan19F-14).